Here is a 287-residue protein sequence, read N- to C-terminus: Probable phosphite transport system-binding protein PtxB (287 aa).

A signal peptide spans 1–23 (MKRLSALLLTCLLSAVSSLSALA).

This sequence belongs to the phosphate/phosphite/phosphonate binding protein family.

In terms of biological role, probably forms part of a binding-protein-dependent phosphite transporter. Required for oxidation of phosphite to phosphate. The sequence is that of Probable phosphite transport system-binding protein PtxB (ptxB) from Stutzerimonas stutzeri (Pseudomonas stutzeri).